Consider the following 126-residue polypeptide: Arginine decarboxylase proenzyme (126 aa).

Ser74 (schiff-base intermediate with substrate; via pyruvic acid) is an active-site residue. Residue Ser74 is modified to Pyruvic acid (Ser); by autocatalysis. Residue His79 is the Proton acceptor; for processing activity of the active site. The active-site Proton donor; for catalytic activity is Cys94.

This sequence belongs to the prokaryotic AdoMetDC family. Type 1 subfamily. Heterooctamer of four alpha and four beta chains arranged as a tetramer of alpha/beta heterodimers. The cofactor is pyruvate. Is synthesized initially as an inactive proenzyme. Formation of the active enzyme involves a self-maturation process in which the active site pyruvoyl group is generated from an internal serine residue via an autocatalytic post-translational modification. Two non-identical subunits are generated from the proenzyme in this reaction, and the pyruvate is formed at the N-terminus of the alpha chain, which is derived from the carboxyl end of the proenzyme. The post-translation cleavage follows an unusual pathway, termed non-hydrolytic serinolysis, in which the side chain hydroxyl group of the serine supplies its oxygen atom to form the C-terminus of the beta chain, while the remainder of the serine residue undergoes an oxidative deamination to produce ammonia and the pyruvoyl group blocking the N-terminus of the alpha chain.

The catalysed reaction is L-arginine + H(+) = agmatine + CO2. It participates in amine and polyamine biosynthesis; agmatine biosynthesis; agmatine from L-arginine: step 1/1. Its function is as follows. Specifically catalyzes the decarboxylation of L-arginine to agmatine. Has no S-adenosylmethionine decarboxylase (AdoMetDC) activity. In Pyrobaculum neutrophilum (strain DSM 2338 / JCM 9278 / NBRC 100436 / V24Sta) (Thermoproteus neutrophilus), this protein is Arginine decarboxylase proenzyme.